The following is a 523-amino-acid chain: NEDD8-activating enzyme E1 regulatory subunit AXL (523 aa).

Belongs to the ubiquitin-activating E1 family. ULA1 subfamily. As to quaternary structure, heterodimer of ECR1 and AXL1. The complex binds to RUB1/NEDD8 and RCE1.

It localises to the nucleus. It functions in the pathway protein modification; protein neddylation. In terms of biological role, regulatory subunit of the dimeric ECR1-AXL1 E1 enzyme. E1 activates RUB1/NEDD8 by first adenylating its C-terminal glycine residue with ATP, thereafter linking this residue to the side chain of the catalytic cysteine, yielding a RUB1-ECR1 thioester and free AMP. E1 finally transfers RUB1 to the catalytic cysteine of RCE1. May function redundantly with AXR1 in the RUB conjugating pathway. Seems not to be functionally equivalent to AXR1 in vivo. The chain is NEDD8-activating enzyme E1 regulatory subunit AXL from Arabidopsis thaliana (Mouse-ear cress).